Here is a 136-residue protein sequence, read N- to C-terminus: Large ribosomal subunit protein uL16 (136 aa).

The protein belongs to the universal ribosomal protein uL16 family. Part of the 50S ribosomal subunit.

Binds 23S rRNA and is also seen to make contacts with the A and possibly P site tRNAs. The protein is Large ribosomal subunit protein uL16 of Ruthia magnifica subsp. Calyptogena magnifica.